The following is a 1258-amino-acid chain: Ice nucleation protein (1258 aa).

Residues 162-1217 (ATYGSTLSGT…LTAGENSVLI (1056 aa)) are octapeptide periodicity. Disordered regions lie at residues 260–287 (YGST…KGSD), 311–342 (TQTA…GYGS), 356–383 (YGST…KGSD), 407–438 (TQTA…GYGS), and 452–480 (YGST…GSDL). Polar residues-rich tracts occupy residues 261-286 (GSTQ…QKGS), 311-334 (TQTA…QKGS), 357-382 (GSTQ…QKGS), 407-430 (TQTA…QKGS), and 453-480 (GSTQ…GSDL).

It belongs to the bacterial ice nucleation protein family.

Its subcellular location is the cell outer membrane. Functionally, ice nucleation proteins enable bacteria to nucleate crystallization in supercooled water. In Enterobacter agglomerans (Erwinia herbicola), this protein is Ice nucleation protein (iceE).